The following is a 354-amino-acid chain: GRAM domain-containing protein 2A (354 aa).

Positions 1 to 29 are enriched in polar residues; the sequence is MTALSRSEATEEGGNQQMHRKTASLNSPV. The interval 1-46 is disordered; sequence MTALSRSEATEEGGNQQMHRKTASLNSPVSCKEKPDRVEEPPDYSL. A compositionally biased stretch (basic and acidic residues) spans 31–40; the sequence is CKEKPDRVEE. The region spanning 72-139 is the GRAM domain; the sequence is QQYHKLFKDV…VSVQMIKKHK (68 aa). The chain crosses the membrane as a helical span at residues 312 to 332; the sequence is LLKVFFVLICFLVMSSSYLAF.

It is found in the endoplasmic reticulum membrane. The protein resides in the cell membrane. In terms of biological role, participates in the organization of endoplasmic reticulum-plasma membrane contact sites (EPCS) with pleiotropic functions including STIM1 recruitment and calcium homeostasis. Constitutive tether that co-localize with ESYT2/3 tethers at endoplasmic reticulum-plasma membrane contact sites in a phosphatidylinositol lipid-dependent manner. Pre-marks the subset of phosphtidylinositol 4,5-biphosphate (PI(4,5)P2)-enriched EPCS destined for the store operated calcium entry pathway (SOCE). This chain is GRAM domain-containing protein 2A, found in Homo sapiens (Human).